Consider the following 270-residue polypeptide: Tryptophan synthase alpha chain (270 aa).

Active-site proton acceptor residues include glutamate 49 and aspartate 60.

This sequence belongs to the TrpA family. In terms of assembly, tetramer of two alpha and two beta chains.

It catalyses the reaction (1S,2R)-1-C-(indol-3-yl)glycerol 3-phosphate + L-serine = D-glyceraldehyde 3-phosphate + L-tryptophan + H2O. It functions in the pathway amino-acid biosynthesis; L-tryptophan biosynthesis; L-tryptophan from chorismate: step 5/5. Functionally, the alpha subunit is responsible for the aldol cleavage of indoleglycerol phosphate to indole and glyceraldehyde 3-phosphate. In Pseudomonas syringae pv. tomato (strain ATCC BAA-871 / DC3000), this protein is Tryptophan synthase alpha chain.